The primary structure comprises 258 residues: Aquaglyceroporin (258 aa).

Topologically, residues Met-1 to Arg-11 are cytoplasmic. Residues Glu-12–Ala-32 form a helical membrane-spanning segment. Residues Asn-33–Lys-45 are Extracellular-facing. Residues Leu-46–Gly-66 form a helical membrane-spanning segment. Positions 66, 67, and 70 each coordinate glycerol. Topologically, residues Ala-67 to Lys-87 are cytoplasmic. A helical transmembrane segment spans residues Ile-88–Gly-108. Topologically, residues Leu-109 to Thr-135 are extracellular. Ser-127 provides a ligand contact to glycerol. Residues Gly-136–Val-156 form a helical membrane-spanning segment. Residues Asp-157–Ser-171 are Cytoplasmic-facing. A helical transmembrane segment spans residues Val-172–Leu-192. 4 residues coordinate glycerol: Gly-189, Phe-190, Asn-193, and Arg-196. The Extracellular segment spans residues Asn-193 to Asn-217. Residues Phe-218 to Tyr-238 traverse the membrane as a helical segment. Residues Asp-239 to Leu-258 are Cytoplasmic-facing.

The protein belongs to the MIP/aquaporin (TC 1.A.8) family. In terms of assembly, homotetramer.

The protein resides in the cell membrane. It catalyses the reaction H2O(in) = H2O(out). It carries out the reaction glycerol(in) = glycerol(out). The enzyme catalyses urea(in) = urea(out). The catalysed reaction is NH4(+)(in) = NH4(+)(out). It catalyses the reaction methylamine(out) = methylamine(in). It carries out the reaction formamide(out) = formamide(in). Its function is as follows. Mediates water and glycerol transport across the cell membrane. Permeable to sugar alcohols of up to five carbons and urea. Permeable to ammonia, methylamine and formamide. The sequence is that of Aquaglyceroporin from Plasmodium falciparum (isolate 3D7).